The chain runs to 82 residues: Small ribosomal subunit protein bS16 (82 aa).

This sequence belongs to the bacterial ribosomal protein bS16 family.

The polypeptide is Small ribosomal subunit protein bS16 (Proteus mirabilis (strain HI4320)).